A 670-amino-acid polypeptide reads, in one-letter code: Protein angel homolog 1 (670 aa).

2 positions are modified to phosphoserine: serine 77 and serine 105.

The protein belongs to the CCR4/nocturin family.

The polypeptide is Protein angel homolog 1 (ANGEL1) (Homo sapiens (Human)).